We begin with the raw amino-acid sequence, 451 residues long: Rab GDP-dissociation inhibitor (451 aa).

2 interaction with YPT1 regions span residues 106 to 112 (RYVDFKQ) and 234 to 259 (YPMYGLGELPQGFARLSAIYGGTYML).

The protein belongs to the Rab GDI family. As to quaternary structure, interacts with the GDP-bound form of Rab GTPase YPT1. Interacts with YPT10.

It is found in the cytoplasm. Functionally, regulates the GDP/GTP exchange reaction of SEC4 by inhibiting the dissociation of GDP from it, and the subsequent binding of GTP to SEC4. Plays an essential role in the yeast secretory pathway. Extracts GDP-bound YPT7 from vacuolar membranes, antagonizing vacuolar membrane fusion. The protein is Rab GDP-dissociation inhibitor (GDI1) of Saccharomyces cerevisiae (strain ATCC 204508 / S288c) (Baker's yeast).